A 426-amino-acid chain; its full sequence is Histidine--tRNA ligase (426 aa).

It belongs to the class-II aminoacyl-tRNA synthetase family. As to quaternary structure, homodimer.

It is found in the cytoplasm. It catalyses the reaction tRNA(His) + L-histidine + ATP = L-histidyl-tRNA(His) + AMP + diphosphate + H(+). This Streptococcus equi subsp. equi (strain 4047) protein is Histidine--tRNA ligase.